Here is a 440-residue protein sequence, read N- to C-terminus: Alpha-methylserine aldolase (440 aa).

Position 255 is an N6-(pyridoxal phosphate)lysine (Lys-255).

This sequence belongs to the SHMT family. Alpha-methylserine aldolase subfamily. Homodimer. The cofactor is pyridoxal 5'-phosphate.

The catalysed reaction is 2-methyl-L-serine = formaldehyde + L-alanine. Catalyzes the reversible interconversion of alpha-methyl-L-serine to L-alanine and formaldehyde. The chain is Alpha-methylserine aldolase from Variovorax paradoxus.